Reading from the N-terminus, the 242-residue chain is UDP-2,3-diacylglucosamine hydrolase (242 aa).

The Mn(2+) site is built by aspartate 8, histidine 10, aspartate 41, asparagine 79, and histidine 114. A substrate-binding site is contributed by asparagine 79 to arginine 80. Aspartate 122, lysine 164, lysine 167, and histidine 195 together coordinate substrate. The Mn(2+) site is built by histidine 195 and histidine 197.

The protein belongs to the LpxH family. Mn(2+) is required as a cofactor.

Its subcellular location is the cell inner membrane. It carries out the reaction UDP-2-N,3-O-bis[(3R)-3-hydroxytetradecanoyl]-alpha-D-glucosamine + H2O = 2-N,3-O-bis[(3R)-3-hydroxytetradecanoyl]-alpha-D-glucosaminyl 1-phosphate + UMP + 2 H(+). Its pathway is glycolipid biosynthesis; lipid IV(A) biosynthesis; lipid IV(A) from (3R)-3-hydroxytetradecanoyl-[acyl-carrier-protein] and UDP-N-acetyl-alpha-D-glucosamine: step 4/6. Hydrolyzes the pyrophosphate bond of UDP-2,3-diacylglucosamine to yield 2,3-diacylglucosamine 1-phosphate (lipid X) and UMP by catalyzing the attack of water at the alpha-P atom. Involved in the biosynthesis of lipid A, a phosphorylated glycolipid that anchors the lipopolysaccharide to the outer membrane of the cell. This chain is UDP-2,3-diacylglucosamine hydrolase, found in Vibrio cholerae serotype O1 (strain ATCC 39315 / El Tor Inaba N16961).